The chain runs to 355 residues: Peptide chain release factor 1 (355 aa).

Glutamine 233 is subject to N5-methylglutamine.

It belongs to the prokaryotic/mitochondrial release factor family. In terms of processing, methylated by PrmC. Methylation increases the termination efficiency of RF1.

Its subcellular location is the cytoplasm. Functionally, peptide chain release factor 1 directs the termination of translation in response to the peptide chain termination codons UAG and UAA. The sequence is that of Peptide chain release factor 1 from Syntrophobacter fumaroxidans (strain DSM 10017 / MPOB).